Here is a 517-residue protein sequence, read N- to C-terminus: Lysophosphatidylcholine acyltransferase 1 (517 aa).

Topologically, residues 1-52 (MRFPNRKLHTAVNGGDSGVSTHFRNPFVHELRFTTLQKLKIAVMTVTLFPVR) are cytoplasmic. Residues 53 to 73 (LLFAAFMMLLAWPFAFVATVG) form a helical; Signal-anchor for type II membrane protein membrane-spanning segment. At 74-517 (RSENAVEPLS…SPRNHSKKQD (444 aa)) the chain is on the lumenal side. Residues 129–134 (HSSYFD) carry the HXXXXD motif motif. N-linked (GlcNAc...) asparagine glycosylation occurs at Asn-207. The region spanning 443-478 (VGDLAVSELFRAIDSQDKGKITFDELCSFMEKCPDL) is the EF-hand domain. Asn-511 carries N-linked (GlcNAc...) asparagine glycosylation. The Di-lysine motif motif lies at 514 to 517 (KKQD).

Belongs to the 1-acyl-sn-glycerol-3-phosphate acyltransferase family.

The protein resides in the endoplasmic reticulum membrane. It localises to the golgi apparatus membrane. Its subcellular location is the cell membrane. The protein localises to the lipid droplet. The catalysed reaction is a 1-acyl-sn-glycero-3-phosphocholine + an acyl-CoA = a 1,2-diacyl-sn-glycero-3-phosphocholine + CoA. It catalyses the reaction a 1-O-alkyl-sn-glycero-3-phosphocholine + acetyl-CoA = a 1-O-alkyl-2-acetyl-sn-glycero-3-phosphocholine + CoA. The enzyme catalyses a 1-acyl-sn-glycero-3-phosphate + an acyl-CoA = a 1,2-diacyl-sn-glycero-3-phosphate + CoA. It carries out the reaction a 1-O-(1Z-alkenyl)-sn-glycero-3-phosphocholine + an acyl-CoA = a 1-O-(1Z-alkenyl)-2-acyl-sn-glycero-3-phosphocholine + CoA. The catalysed reaction is 1-acyl-sn-glycero-3-phospho-(1'-sn-glycerol) + an acyl-CoA = a 1,2-diacyl-sn-glycero-3-phospho-(1'-sn-glycerol) + CoA. It catalyses the reaction 1-hexadecanoyl-sn-glycero-3-phosphocholine + hexadecanoyl-CoA = 1,2-dihexadecanoyl-sn-glycero-3-phosphocholine + CoA. The enzyme catalyses 1-O-hexadecyl-sn-glycero-3-phosphocholine + hexadecanoyl-CoA = 1-O-hexadecyl-2-hexadecanoyl-sn-glycero-3-phosphocholine + CoA. It carries out the reaction a 1-O-(1Z-alkenyl)-sn-glycero-3-phosphocholine + hexadecanoyl-CoA = 1-O-(1Z)-alkenyl-2-hexadecanoyl-sn-glycero-3-phosphocholine + CoA. The catalysed reaction is 1-hexadecanoyl-sn-glycero-3-phospho-(1'-sn-glycerol) + hexadecanoyl-CoA = 1,2-dihexadecanoyl-sn-glycero-3-phospho-(1'-sn-glycerol) + CoA. It catalyses the reaction 1-dodecanoyl-sn-glycero-3-phosphocholine + hexadecanoyl-CoA = 1-dodecanoyl-2-hexadecanoyl-sn-glycero-3-phosphocholine + CoA. The enzyme catalyses 1-tetradecanoyl-sn-glycero-3-phosphocholine + hexadecanoyl-CoA = 1-tetradecanoyl-2-hexadecanoyl-sn-glycero-3-phosphocholine + CoA. It carries out the reaction 1-O-octadecyl-sn-glycero-3-phosphocholine + hexadecanoyl-CoA = 1-O-octadecyl-2-hexadecanoyl-sn-glycero-3-phosphocholine + CoA. The catalysed reaction is 1-octadecanoyl-sn-glycero-3-phosphocholine + hexadecanoyl-CoA = 1-octadecanoyl-2-hexadecanoyl-sn-glycero-3-phosphocholine + CoA. It catalyses the reaction 1-(9Z-octadecenoyl)-sn-glycero-3-phosphocholine + hexadecanoyl-CoA = 1-(9Z-octadecenoyl)-2-hexadecanoyl-sn-glycero-3-phosphocholine + CoA. The enzyme catalyses 1-eicosanoyl-sn-glycero-3-phosphocholine + hexadecanoyl-CoA = 1-eicosanoyl-2-hexadecanoyl-sn-glycero-3-phosphocholine + CoA. It carries out the reaction hexanoyl-CoA + 1-hexadecanoyl-sn-glycero-3-phosphocholine = 1-hexadecanoyl-2-hexanoyl-sn-glycero-3-phosphocholine + CoA. The catalysed reaction is octanoyl-CoA + 1-hexadecanoyl-sn-glycero-3-phosphocholine = 1-hexadecanoyl-2-octanoyl-sn-glycero-3-phosphocholine + CoA. It catalyses the reaction decanoyl-CoA + 1-hexadecanoyl-sn-glycero-3-phosphocholine = 1-hexadecanoyl-2-decanoyl-sn-glycero-3-phosphocholine + CoA. The enzyme catalyses dodecanoyl-CoA + 1-hexadecanoyl-sn-glycero-3-phosphocholine = 1-hexadecanoyl-2-dodecanoyl-sn-glycero-3-phosphocholine + CoA. It carries out the reaction tetradecanoyl-CoA + 1-hexadecanoyl-sn-glycero-3-phosphocholine = 1-hexadecanoyl-2-tetradecanoyl-sn-glycero-3-phosphocholine + CoA. The catalysed reaction is 1-hexadecanoyl-sn-glycero-3-phosphocholine + (9Z)-octadecenoyl-CoA = 1-hexadecanoyl-2-(9Z-octadecenoyl)-sn-glycero-3-phosphocholine + CoA. It catalyses the reaction (9Z,12Z)-octadecadienoyl-CoA + 1-hexadecanoyl-sn-glycero-3-phosphocholine = 1-hexadecanoyl-2-(9Z,12Z-octadecadienoyl)-sn-glycero-3-phosphocholine + CoA. The enzyme catalyses (4Z,7Z,10Z,13Z,16Z,19Z)-docosahexaenoyl-CoA + 1-hexadecanoyl-sn-glycero-3-phosphocholine = 1-hexadecanoyl-2-(4Z,7Z,10Z,13Z,16Z,19Z-docosahexaenoyl)-sn-glycero-3-phosphocholine + CoA. It carries out the reaction 1-hexadecanoyl-sn-glycero-3-phosphocholine + acetyl-CoA = 1-hexadecanoyl-2-acetyl-sn-glycero-3-phosphocholine + CoA. The catalysed reaction is eicosanoyl-CoA + 1-hexadecanoyl-sn-glycero-3-phosphocholine = 1-hexadecanoyl-2-eicosanoyl-sn-glycero-3-phosphocholine + CoA. It catalyses the reaction 1-O-hexadecyl-sn-glycero-3-phosphocholine + acetyl-CoA = 1-O-hexadecyl-2-acetyl-sn-glycero-3-phosphocholine + CoA. The enzyme catalyses a 1-acyl-sn-glycero-3-phosphocholine + hexadecanoyl-CoA = 1-acyl-2-hexadecanoyl-sn-glycero-3-phosphocholine + CoA. It carries out the reaction a 1-acyl-sn-glycero-3-phosphate + hexadecanoyl-CoA = 1-acyl-2-hexadecanoyl-sn-glycero-3-phosphate + CoA. The catalysed reaction is 1-acyl-sn-glycero-3-phospho-(1'-sn-glycerol) + hexadecanoyl-CoA = 1-acyl-2-hexadecanoyl-sn-glycero-3-phospho-(1'-sn-glycerol) + CoA. The protein operates within lipid metabolism; phospholipid metabolism. In terms of biological role, exhibits both acyltransferase and acetyltransferase activities. Activity is calcium-independent. Catalyzes the conversion of lysophosphatidylcholine (1-acyl-sn-glycero-3-phosphocholine or LPC) into phosphatidylcholine (1,2-diacyl-sn-glycero-3-phosphocholine or PC). Catalyzes the conversion 1-acyl-sn-glycerol-3-phosphate (lysophosphatidic acid or LPA) into 1,2-diacyl-sn-glycerol-3-phosphate (phosphatidic acid or PA) by incorporating an acyl moiety at the sn-2 position of the glycerol backbone. The chain is Lysophosphatidylcholine acyltransferase 1 (lpcat1) from Danio rerio (Zebrafish).